The primary structure comprises 27 residues: Agglutinin alpha chain (27 aa).

Residues 1–27 (GKAFDDGAFTGIREINLSINKETAIGD) enclose the Jacalin-type lectin domain.

This sequence belongs to the jacalin lectin family. Tetramer of four alpha chains associated with two or four beta chains. Post-translationally, N-glycosylated.

Its function is as follows. D-galactose-specific lectin, binds the T-antigen structure Gal-beta1,3-GalNAc (Thomsen-Friedenreich-antigen-specific lectin). Potent and selective stimulant of distinct T- and B-cell functions. Shows a unique ability to specifically recognize IgA-1 from human serum. This is Agglutinin alpha chain from Artocarpus tonkinensis.